The sequence spans 930 residues: Protein translocase subunit SecA (930 aa).

ATP-binding positions include Gln-87, 105–109 (GEGKT), and Asp-515. Residues Cys-914, Cys-916, Cys-925, and His-926 each coordinate Zn(2+).

This sequence belongs to the SecA family. As to quaternary structure, monomer and homodimer. Part of the essential Sec protein translocation apparatus which comprises SecA, SecYEG and auxiliary proteins SecDF-YajC and YidC. The cofactor is Zn(2+).

It localises to the cell inner membrane. It is found in the cytoplasm. The catalysed reaction is ATP + H2O + cellular proteinSide 1 = ADP + phosphate + cellular proteinSide 2.. Its function is as follows. Part of the Sec protein translocase complex. Interacts with the SecYEG preprotein conducting channel. Has a central role in coupling the hydrolysis of ATP to the transfer of proteins into and across the cell membrane, serving both as a receptor for the preprotein-SecB complex and as an ATP-driven molecular motor driving the stepwise translocation of polypeptide chains across the membrane. The sequence is that of Protein translocase subunit SecA from Cupriavidus metallidurans (strain ATCC 43123 / DSM 2839 / NBRC 102507 / CH34) (Ralstonia metallidurans).